Consider the following 500-residue polypeptide: Protein FAM114A2 (500 aa).

A disordered region spans residues 1-82; the sequence is MSNKDDLETA…AAGKETVSKD (82 aa). 3 positions are modified to phosphoserine: Ser93, Ser152, and Ser215.

It belongs to the FAM114 family.

The chain is Protein FAM114A2 (FAM114A1) from Bos taurus (Bovine).